Reading from the N-terminus, the 362-residue chain is Anthranilate phosphoribosyltransferase 2 (362 aa).

5-phospho-alpha-D-ribose 1-diphosphate is bound by residues G103, 106–107, T111, 113–116, 131–139, and S143; these read GD, NIST, and KHGNRSASS. G103 is a binding site for anthranilate. Residue S115 participates in Mg(2+) binding. An anthranilate-binding site is contributed by N134. Anthranilate is bound at residue R189. Residues D248 and E249 each coordinate Mg(2+).

Belongs to the anthranilate phosphoribosyltransferase family. As to quaternary structure, homodimer. Requires Mg(2+) as cofactor.

It carries out the reaction N-(5-phospho-beta-D-ribosyl)anthranilate + diphosphate = 5-phospho-alpha-D-ribose 1-diphosphate + anthranilate. The protein operates within amino-acid biosynthesis; L-tryptophan biosynthesis; L-tryptophan from chorismate: step 2/5. In terms of biological role, catalyzes the transfer of the phosphoribosyl group of 5-phosphorylribose-1-pyrophosphate (PRPP) to anthranilate to yield N-(5'-phosphoribosyl)-anthranilate (PRA). This Nostoc sp. (strain PCC 7120 / SAG 25.82 / UTEX 2576) protein is Anthranilate phosphoribosyltransferase 2.